Reading from the N-terminus, the 856-residue chain is Increased rDNA silencing protein 4 (856 aa).

3 disordered regions span residues M1–S204, K230–E563, and T589–L672. Low complexity-rich tracts occupy residues G12 to A42, V67 to G84, and S111 to T130. Basic and acidic residues predominate over residues H152–P162. Residues A194–S204 show a composition bias toward low complexity. Positions K239–H254 are enriched in basic residues. Composition is skewed to polar residues over residues H255–C275 and S303–G315. Residues G329–G347 show a composition bias toward basic and acidic residues. Composition is skewed to polar residues over residues P396–S410, R451–E468, and R478–V488. Residues K503 to R514 are compositionally biased toward basic and acidic residues. Residues T517 to P535 show a composition bias toward low complexity. Residues R603 to T620 show a composition bias toward basic residues. Residues P644–A654 are compositionally biased toward polar residues. The 90-residue stretch at D743–R832 folds into the EH domain.

This sequence belongs to the IRS4 family.

Its function is as follows. Positive regulator of phosphatidylinositol 4,5-bisphosphate turnover and negatively regulates signaling through the cell integrity pathway. Involved in rDNA silencing. This is Increased rDNA silencing protein 4 (irs-4) from Neurospora crassa (strain ATCC 24698 / 74-OR23-1A / CBS 708.71 / DSM 1257 / FGSC 987).